A 635-amino-acid chain; its full sequence is Threonine--tRNA ligase (635 aa).

Positions 1–61 constitute a TGS domain; it reads MIAITLPDGS…DRDAELAIVT (61 aa). The catalytic stretch occupies residues 242-533; it reads DHRKLGKTLD…LLENHAGALP (292 aa). The Zn(2+) site is built by Cys-333, His-384, and His-510.

The protein belongs to the class-II aminoacyl-tRNA synthetase family. As to quaternary structure, homodimer. Zn(2+) serves as cofactor.

It is found in the cytoplasm. It carries out the reaction tRNA(Thr) + L-threonine + ATP = L-threonyl-tRNA(Thr) + AMP + diphosphate + H(+). Its function is as follows. Catalyzes the attachment of threonine to tRNA(Thr) in a two-step reaction: L-threonine is first activated by ATP to form Thr-AMP and then transferred to the acceptor end of tRNA(Thr). Also edits incorrectly charged L-seryl-tRNA(Thr). The sequence is that of Threonine--tRNA ligase from Cupriavidus necator (strain ATCC 17699 / DSM 428 / KCTC 22496 / NCIMB 10442 / H16 / Stanier 337) (Ralstonia eutropha).